Reading from the N-terminus, the 836-residue chain is Probable serine/threonine-protein kinase dyrk1 (836 aa).

Residues 99–278 are compositionally biased toward low complexity; sequence QQQYQQQHNN…SSNNNNNNKQ (180 aa). The segment at 99-286 is disordered; sequence QQQYQQQHNN…KQSKYNDGYD (188 aa). Residues 304 to 624 form the Protein kinase domain; that stretch reads FEIISSLGKG…PLEALQHSFF (321 aa). ATP contacts are provided by residues 310 to 318 and Lys-333; that span reads LGKGSFGQV. Residue Asp-432 is the Proton acceptor of the active site. 3 disordered regions span residues 627–697, 718–767, and 785–836; these read DETS…QQQQ, TYSP…INSN, and NIYN…NNNI. The span at 630-697 shows a compositional bias: low complexity; sequence SQPPQQQSQQ…QQLQQQQQQQ (68 aa). The segment covering 718 to 728 has biased composition (polar residues); sequence TYSPTTQQSNH. The span at 729 to 744 shows a compositional bias: basic and acidic residues; the sequence is KLVDQMKKASMKDKSP. Low complexity predominate over residues 785 to 816; that stretch reads NIYNNNNNNNNNNNNNNNNNNSNNYNNSNELS.

Belongs to the protein kinase superfamily. CMGC Ser/Thr protein kinase family. MNB/DYRK subfamily.

The enzyme catalyses L-seryl-[protein] + ATP = O-phospho-L-seryl-[protein] + ADP + H(+). The catalysed reaction is L-threonyl-[protein] + ATP = O-phospho-L-threonyl-[protein] + ADP + H(+). It catalyses the reaction L-tyrosyl-[protein] + ATP = O-phospho-L-tyrosyl-[protein] + ADP + H(+). The sequence is that of Probable serine/threonine-protein kinase dyrk1 (dyrk1) from Dictyostelium discoideum (Social amoeba).